The sequence spans 215 residues: 3-isopropylmalate dehydratase small subunit (215 aa).

This sequence belongs to the LeuD family. LeuD type 1 subfamily. As to quaternary structure, heterodimer of LeuC and LeuD.

It catalyses the reaction (2R,3S)-3-isopropylmalate = (2S)-2-isopropylmalate. It functions in the pathway amino-acid biosynthesis; L-leucine biosynthesis; L-leucine from 3-methyl-2-oxobutanoate: step 2/4. Its function is as follows. Catalyzes the isomerization between 2-isopropylmalate and 3-isopropylmalate, via the formation of 2-isopropylmaleate. This chain is 3-isopropylmalate dehydratase small subunit, found in Xanthomonas euvesicatoria pv. vesicatoria (strain 85-10) (Xanthomonas campestris pv. vesicatoria).